A 286-amino-acid chain; its full sequence is Pyridoxine 4-dehydrogenase (286 aa).

The active-site Proton donor is Tyr-59. 210–218 (FPLGGFTPL) contacts NADP(+).

This sequence belongs to the aldo/keto reductase family. Aldo/keto reductase 2 subfamily.

The enzyme catalyses pyridoxine + NADP(+) = pyridoxal + NADPH + H(+). The catalysed reaction is pyridoxine + NAD(+) = pyridoxal + NADH + H(+). Functionally, catalyzes the NAD(P)H-dependent reduction of pyridoxal to pyridoxine in vitro. Is not able to reduce 4-pyridoxate, and to oxidize pyridoxine or pyridoxamine. Has Kemp eliminase activity towards the non-physiological substrate 5-nitrobenzisoxazole, producing 4-nitro-2-cyanophenol; this activity is not considered to be physiologically relevant. The chain is Pyridoxine 4-dehydrogenase from Escherichia coli (strain K12).